Reading from the N-terminus, the 369-residue chain is Pyrimidine monooxygenase RutA (369 aa).

Residues isoleucine 49–lysine 50, asparagine 115, glutamate 124, arginine 140–tyrosine 141, and serine 190 each bind FMN.

The protein belongs to the NtaA/SnaA/DszA monooxygenase family. RutA subfamily.

The catalysed reaction is uracil + FMNH2 + NADH + O2 = (Z)-3-ureidoacrylate + FMN + NAD(+) + H2O + H(+). It catalyses the reaction thymine + FMNH2 + NADH + O2 = (Z)-2-methylureidoacrylate + FMN + NAD(+) + H2O + H(+). In terms of biological role, catalyzes the pyrimidine ring opening between N-3 and C-4 by an unusual flavin hydroperoxide-catalyzed mechanism, adding oxygen atoms in the process to yield ureidoacrylate peracid, that immediately reacts with FMN forming ureidoacrylate and FMN-N(5)-oxide. The FMN-N(5)-oxide reacts spontaneously with NADH to produce FMN. Requires the flavin reductase RutF to regenerate FMN in vivo. The protein is Pyrimidine monooxygenase RutA of Acinetobacter baylyi (strain ATCC 33305 / BD413 / ADP1).